Reading from the N-terminus, the 93-residue chain is Phosphoribosyl-ATP pyrophosphatase (93 aa).

It belongs to the PRA-PH family.

The protein localises to the cytoplasm. It carries out the reaction 1-(5-phospho-beta-D-ribosyl)-ATP + H2O = 1-(5-phospho-beta-D-ribosyl)-5'-AMP + diphosphate + H(+). It functions in the pathway amino-acid biosynthesis; L-histidine biosynthesis; L-histidine from 5-phospho-alpha-D-ribose 1-diphosphate: step 2/9. The sequence is that of Phosphoribosyl-ATP pyrophosphatase from Mycolicibacterium vanbaalenii (strain DSM 7251 / JCM 13017 / BCRC 16820 / KCTC 9966 / NRRL B-24157 / PYR-1) (Mycobacterium vanbaalenii).